Consider the following 75-residue polypeptide: Sec-independent protein translocase protein TatA (75 aa).

Residues 1–21 (MGSFSIWHWLVVLAIVLLVFG) form a helical membrane-spanning segment. A disordered region spans residues 41–75 (KGMRDEDKPNAQLGDESRTQDASRTAQDEHDRNAR).

This sequence belongs to the TatA/E family. In terms of assembly, the Tat system comprises two distinct complexes: a TatABC complex, containing multiple copies of TatA, TatB and TatC subunits, and a separate TatA complex, containing only TatA subunits. Substrates initially bind to the TatABC complex, which probably triggers association of the separate TatA complex to form the active translocon.

The protein localises to the cell inner membrane. Its function is as follows. Part of the twin-arginine translocation (Tat) system that transports large folded proteins containing a characteristic twin-arginine motif in their signal peptide across membranes. TatA could form the protein-conducting channel of the Tat system. The sequence is that of Sec-independent protein translocase protein TatA from Stenotrophomonas maltophilia (strain K279a).